Reading from the N-terminus, the 375-residue chain is UDP-N-acetylglucosamine--N-acetylmuramyl-(pentapeptide) pyrophosphoryl-undecaprenol N-acetylglucosamine transferase (375 aa).

Residues 15-17 (TGG), N126, R169, S197, and Q298 contribute to the UDP-N-acetyl-alpha-D-glucosamine site.

Belongs to the glycosyltransferase 28 family. MurG subfamily.

Its subcellular location is the cell inner membrane. The enzyme catalyses di-trans,octa-cis-undecaprenyl diphospho-N-acetyl-alpha-D-muramoyl-L-alanyl-D-glutamyl-meso-2,6-diaminopimeloyl-D-alanyl-D-alanine + UDP-N-acetyl-alpha-D-glucosamine = di-trans,octa-cis-undecaprenyl diphospho-[N-acetyl-alpha-D-glucosaminyl-(1-&gt;4)]-N-acetyl-alpha-D-muramoyl-L-alanyl-D-glutamyl-meso-2,6-diaminopimeloyl-D-alanyl-D-alanine + UDP + H(+). It participates in cell wall biogenesis; peptidoglycan biosynthesis. In terms of biological role, cell wall formation. Catalyzes the transfer of a GlcNAc subunit on undecaprenyl-pyrophosphoryl-MurNAc-pentapeptide (lipid intermediate I) to form undecaprenyl-pyrophosphoryl-MurNAc-(pentapeptide)GlcNAc (lipid intermediate II). The protein is UDP-N-acetylglucosamine--N-acetylmuramyl-(pentapeptide) pyrophosphoryl-undecaprenol N-acetylglucosamine transferase of Rhodopseudomonas palustris (strain BisB18).